We begin with the raw amino-acid sequence, 193 residues long: MFKNEITNLQNHFLVAMPTLQDPLFKKSVVYICEHNDTGAMGIVINKPVEKYTVETILKNLKITSTQRDPSVQLNHPVFSGGPLLNDRGFILHTPQTGFGSSINISSQTMITTSKDILETLGTPNQPKNILVALGYSGWTKGQLEQELIESTWIAVPADETILFHTPIFNRWNAAAKIIGVNMYNMNSQTGHA.

Belongs to the UPF0301 (AlgH) family.

This is UPF0301 protein Bfl251 from Blochmanniella floridana.